The primary structure comprises 161 residues: Nucleotide-binding protein Gmet_3206 (161 aa).

This sequence belongs to the YajQ family.

Functionally, nucleotide-binding protein. The protein is Nucleotide-binding protein Gmet_3206 of Geobacter metallireducens (strain ATCC 53774 / DSM 7210 / GS-15).